A 379-amino-acid chain; its full sequence is GPN-loop GTPase QQT2 (379 aa).

M1 is modified (N-acetylmethionine). 51–56 (GSGKTS) lines the GTP pocket. The Gly-Pro-Asn (GPN)-loop; involved in dimer interface motif lies at 108–110 (GPN). Residues 211–214 (NKTD) and A267 contribute to the GTP site. Positions 288–322 (METYKADLDMRKADKERLEEERKKHEMEKLRKDME) form a coiled coil. Basic and acidic residues-rich tracts occupy residues 303-322 (ERLE…KDME) and 335-346 (LKDRDATEKMML). The disordered stretch occupies residues 303–379 (ERLEEERKKH…EDDETKHYYL (77 aa)). A compositionally biased stretch (acidic residues) spans 347–372 (EEDDEDFQVEDEEDSDDAIDEDDEDD).

This sequence belongs to the GPN-loop GTPase family. In terms of assembly, heterodimer with QQT1. In terms of tissue distribution, expressed in individual cells of roots, leaves and flowers.

The protein resides in the cytoplasm. It is found in the nucleus. It localises to the cytoskeleton. The protein localises to the spindle. Its subcellular location is the phragmoplast. Its function is as follows. Small GTPase that is essential for the correct formation of the tangential divisions in early embryos. Associates with microtubule during mitosis and may function in the positioning of the division plane. May participate in the patterning of the early embryo at the octant-dermatogen transition. The polypeptide is GPN-loop GTPase QQT2 (Arabidopsis thaliana (Mouse-ear cress)).